The primary structure comprises 309 residues: 2-phosphoglycerate kinase (309 aa).

The 88-residue stretch at asparagine 5 to proline 92 folds into the ATP-cone domain.

Belongs to the 2-phosphoglycerate kinase family. The cofactor is a divalent metal cation.

It carries out the reaction (2R)-2-phosphoglycerate + ATP = (2R)-2,3-bisphosphoglycerate + ADP + H(+). It participates in thermoadapter biosynthesis; cyclic 2,3-diphosphoglycerate biosynthesis; cyclic 2,3-diphosphoglycerate from 2-phospho-D-glycerate: step 1/2. In terms of biological role, catalyzes the phosphorylation of 2-phosphoglycerate to 2,3-diphosphoglycerate. Involved in the biosynthesis of cyclic 2,3-bisphosphoglycerate, a thermoprotectant. In Methanocaldococcus jannaschii (strain ATCC 43067 / DSM 2661 / JAL-1 / JCM 10045 / NBRC 100440) (Methanococcus jannaschii), this protein is 2-phosphoglycerate kinase.